A 263-amino-acid polypeptide reads, in one-letter code: Small ribosomal subunit protein eS4 (263 aa).

Positions 42–104 (LPLIVFLRNR…TGEHFRLVYD (63 aa)) constitute an S4 RNA-binding domain.

This sequence belongs to the eukaryotic ribosomal protein eS4 family.

This is Small ribosomal subunit protein eS4 (RPS4Y1) from Pongo pygmaeus (Bornean orangutan).